A 329-amino-acid polypeptide reads, in one-letter code: MARRPLLEFEKPLIELEQQIEQIRQLARDSEVDVSQQLLQLETLAARRREEIFQNLTPAQKIQVARHPHRPSTLDFIQMFCDDWVELHGDRRGSDDQALVGGLGRIGDRSVVLLGHQKGRDTKENVARNFGMATPGGYRKALRLMEHADRFGLPIFAFIDTPGAYAGLLAEEQGQGEAIAVNLREMFRLRVPIIATVIGEGGSGGALGIGVADRLLMFEHSVYTVASPEACASILWRDAAKAPEAAAALRITGKDLLSLGVVDEVLAEPSGGNNWAPLEAGATLREALERNLSELLALPPQELRDQRYRKFRAMGRFIDQASSDADSAS.

The CoA carboxyltransferase C-terminal domain maps to 40-294; the sequence is QLETLAARRR…REALERNLSE (255 aa).

It belongs to the AccA family. Acetyl-CoA carboxylase is a heterohexamer composed of biotin carboxyl carrier protein (AccB), biotin carboxylase (AccC) and two subunits each of ACCase subunit alpha (AccA) and ACCase subunit beta (AccD).

The protein resides in the cytoplasm. It carries out the reaction N(6)-carboxybiotinyl-L-lysyl-[protein] + acetyl-CoA = N(6)-biotinyl-L-lysyl-[protein] + malonyl-CoA. It functions in the pathway lipid metabolism; malonyl-CoA biosynthesis; malonyl-CoA from acetyl-CoA: step 1/1. Its function is as follows. Component of the acetyl coenzyme A carboxylase (ACC) complex. First, biotin carboxylase catalyzes the carboxylation of biotin on its carrier protein (BCCP) and then the CO(2) group is transferred by the carboxyltransferase to acetyl-CoA to form malonyl-CoA. The polypeptide is Acetyl-coenzyme A carboxylase carboxyl transferase subunit alpha (Synechococcus sp. (strain CC9311)).